We begin with the raw amino-acid sequence, 516 residues long: Putative fatty acyl-CoA reductase CG8306 (516 aa).

Helical transmembrane passes span 356–376 (WVFRLSAILFHFIPAIILDLV), 471–491 (ILLGLHVALQLSFWYGVFKLI), and 496–516 (GISTAKAALVLPVLYYLFGLL).

Belongs to the fatty acyl-CoA reductase family.

It localises to the membrane. The catalysed reaction is a long-chain fatty acyl-CoA + 2 NADPH + 2 H(+) = a long-chain primary fatty alcohol + 2 NADP(+) + CoA. In terms of biological role, catalyzes the reduction of C16 or C18 fatty acyl-CoA to fatty alcohols. In Drosophila melanogaster (Fruit fly), this protein is Putative fatty acyl-CoA reductase CG8306.